The primary structure comprises 113 residues: uncharacterized protein (113 aa).

A signal peptide spans 1–22; sequence MCRFPTFLLIAIAITMLPTILS. The N-linked (GlcNAc...) asparagine glycan is linked to Asn47.

The protein localises to the secreted. This is an uncharacterized protein from Caenorhabditis elegans.